Here is a 42-residue protein sequence, read N- to C-terminus: MQDVETYLSTAPVLATLWFGFLAGLLIEINRFFPDALVFPSL.

A helical membrane pass occupies residues 7–27 (YLSTAPVLATLWFGFLAGLLI).

The protein belongs to the PsaJ family.

It is found in the plastid. The protein resides in the chloroplast thylakoid membrane. Functionally, may help in the organization of the PsaE and PsaF subunits. This chain is Photosystem I reaction center subunit IX, found in Huperzia lucidula (Shining clubmoss).